A 585-amino-acid polypeptide reads, in one-letter code: MSAAAVDPVSATPMTGSKEMSLEEPKKMTREDWRKKKELEEQRKLGNAPAEVDEEGKDINPHIPQYISSVPWYIDPSKRPTLKHQRPQPEKQKQFSSSGEWYKRGVKENSITTKYRKGACENCGAMTHKRKDCFERPRRVGAKFTGTNIAPDEHVQPQLMFDYDGKRDRWNGYNPEEHMKIVEEYAKVDLAKRTLKAQKLQEELASGKLVEQANSPKHQWGEEEPNSQMEKDHNSEDEDEDKYADDIDMPGQNFDSKRRITVRNLRIREDIAKYLRNLDPNSAYYDPKTRAMRENPYANAGKNPDEVSYAGDNFVRYTGDTISMAQTQLFAWEAYDKGSEVHLQADPTKLELLYKSFKVKKEDFKEQQKESILEKYGGQEHLDAPPAELLLAQTEDYVEYSRHGTVIKGQERAVACSKYEEDVKINNHTHIWGSYWKEGRWGYKCCHSFFKYSYCTGEAGKESVNSEECIITGATAEESVKKPQALLELHQEKLKEEKKKKKKKKKHRKSSSDSDDEERKQEKLKKALNAEEARLLHVKEIMQIDERKRPYNSIYETREPTEEEMEAYRMKRQRPDDPMASFLGQ.

The segment at 1-102 (MSAAAVDPVS…KQFSSSGEWY (102 aa)) is disordered. At Ser2 the chain carries N-acetylserine. Basic and acidic residues predominate over residues 20–44 (MSLEEPKKMTREDWRKKKELEEQRK). The CCHC-type zinc-finger motif lies at 118-135 (GACENCGAMTHKRKDCFE). The Bipartite nuclear localization signal signature appears at 129–169 (KRKDCFERPRRVGAKFTGTNIAPDEHVQPQLMFDYDGKRDR). Residues 206–254 (SGKLVEQANSPKHQWGEEEPNSQMEKDHNSEDEDEDKYADDIDMPGQNF) are disordered. 3 positions are modified to phosphoserine: Ser215, Ser227, and Ser235. Residues 235–248 (SEDEDEDKYADDID) are compositionally biased toward acidic residues. Glycyl lysine isopeptide (Lys-Gly) (interchain with G-Cter in SUMO2) cross-links involve residues Lys349 and Lys408. Disordered regions lie at residues 496-529 (EEKK…KALN) and 547-585 (RKRP…FLGQ). Over residues 498–509 (KKKKKKKKKHRK) the composition is skewed to basic residues. Basic and acidic residues-rich tracts occupy residues 517–529 (EERK…KALN) and 556–577 (ETRE…RPDD).

This sequence belongs to the SLU7 family. As to quaternary structure, component of pre-catalytic, catalytic and post-catalytic spliceosomes. Associates with the spliceosome prior to recognition of the 3'-splice site for step II, probably during catalysis of step I.

It is found in the nucleus. The protein resides in the nucleus speckle. Its subcellular location is the cytoplasm. Required for pre-mRNA splicing as component of the spliceosome. Participates in the second catalytic step of pre-mRNA splicing, when the free hydroxyl group of exon I attacks the 3'-splice site to generate spliced mRNA and the excised lariat intron. Required for holding exon 1 properly in the spliceosome and for correct AG identification when more than one possible AG exists in 3'-splicing site region. May be involved in the activation of proximal AG. Probably also involved in alternative splicing regulation. In Mus musculus (Mouse), this protein is Pre-mRNA-splicing factor SLU7 (Slu7).